Here is a 149-residue protein sequence, read N- to C-terminus: General odorant-binding protein 99b (149 aa).

Positions 1-16 (MKVLIVLLLGLAFVLA) are cleaved as a signal peptide. Disulfide bonds link C40–C71, C67–C125, and C114–C134.

This sequence belongs to the PBP/GOBP family. Expressed in adult olfactory system. Expressed in subsets of sensilla in both olfactory organs, the maxillary palps, and third antennal segments.

The protein resides in the secreted. Its function is as follows. Present in the aqueous fluid surrounding olfactory sensory dendrites and are thought to aid in the capture and transport of hydrophobic odorants into and through this fluid. This chain is General odorant-binding protein 99b (Obp99b), found in Drosophila melanogaster (Fruit fly).